The chain runs to 452 residues: Bifunctional protein GlmU (452 aa).

A pyrophosphorylase region spans residues 1–226 (MSLSVVILAA…ATEVEGVNTR (226 aa)). UDP-N-acetyl-alpha-D-glucosamine is bound by residues 8–11 (LAAG), K22, Q73, 78–79 (GT), 100–102 (YGD), G137, E151, N166, and N224. A Mg(2+)-binding site is contributed by D102. Mg(2+) is bound at residue N224. The linker stretch occupies residues 227-247 (LQLANLERAYQLKKATELLLS). Positions 248-452 (GVMLRDPNRF…INNWKRPTKK (205 aa)) are N-acetyltransferase. 2 residues coordinate UDP-N-acetyl-alpha-D-glucosamine: R330 and K348. The Proton acceptor role is filled by H360. Y363 and N374 together coordinate UDP-N-acetyl-alpha-D-glucosamine. Acetyl-CoA is bound by residues A377, 383–384 (NY), S402, A420, and R437.

The protein in the N-terminal section; belongs to the N-acetylglucosamine-1-phosphate uridyltransferase family. It in the C-terminal section; belongs to the transferase hexapeptide repeat family. Homotrimer. The cofactor is Mg(2+).

Its subcellular location is the cytoplasm. It carries out the reaction alpha-D-glucosamine 1-phosphate + acetyl-CoA = N-acetyl-alpha-D-glucosamine 1-phosphate + CoA + H(+). It catalyses the reaction N-acetyl-alpha-D-glucosamine 1-phosphate + UTP + H(+) = UDP-N-acetyl-alpha-D-glucosamine + diphosphate. It participates in nucleotide-sugar biosynthesis; UDP-N-acetyl-alpha-D-glucosamine biosynthesis; N-acetyl-alpha-D-glucosamine 1-phosphate from alpha-D-glucosamine 6-phosphate (route II): step 2/2. The protein operates within nucleotide-sugar biosynthesis; UDP-N-acetyl-alpha-D-glucosamine biosynthesis; UDP-N-acetyl-alpha-D-glucosamine from N-acetyl-alpha-D-glucosamine 1-phosphate: step 1/1. Its pathway is bacterial outer membrane biogenesis; LPS lipid A biosynthesis. Catalyzes the last two sequential reactions in the de novo biosynthetic pathway for UDP-N-acetylglucosamine (UDP-GlcNAc). The C-terminal domain catalyzes the transfer of acetyl group from acetyl coenzyme A to glucosamine-1-phosphate (GlcN-1-P) to produce N-acetylglucosamine-1-phosphate (GlcNAc-1-P), which is converted into UDP-GlcNAc by the transfer of uridine 5-monophosphate (from uridine 5-triphosphate), a reaction catalyzed by the N-terminal domain. This chain is Bifunctional protein GlmU, found in Psychromonas ingrahamii (strain DSM 17664 / CCUG 51855 / 37).